The following is a 406-amino-acid chain: Tryptophan synthase beta chain (406 aa).

The residue at position 99 (lysine 99) is an N6-(pyridoxal phosphate)lysine.

This sequence belongs to the TrpB family. In terms of assembly, tetramer of two alpha and two beta chains. Pyridoxal 5'-phosphate is required as a cofactor.

It carries out the reaction (1S,2R)-1-C-(indol-3-yl)glycerol 3-phosphate + L-serine = D-glyceraldehyde 3-phosphate + L-tryptophan + H2O. It participates in amino-acid biosynthesis; L-tryptophan biosynthesis; L-tryptophan from chorismate: step 5/5. In terms of biological role, the beta subunit is responsible for the synthesis of L-tryptophan from indole and L-serine. This is Tryptophan synthase beta chain from Brucella canis (strain ATCC 23365 / NCTC 10854 / RM-666).